A 34-amino-acid polypeptide reads, in one-letter code: Ornithine carbamoyltransferase, catabolic (34 aa).

This sequence belongs to the aspartate/ornithine carbamoyltransferase superfamily. OTCase family. In terms of assembly, probably nonameric or dodecameric.

It is found in the cytoplasm. The catalysed reaction is carbamoyl phosphate + L-ornithine = L-citrulline + phosphate + H(+). It functions in the pathway amino-acid degradation; L-arginine degradation via ADI pathway; carbamoyl phosphate from L-arginine: step 2/2. The sequence is that of Ornithine carbamoyltransferase, catabolic (arcB) from Pseudomonas putida (Arthrobacter siderocapsulatus).